The primary structure comprises 278 residues: MDVRQSIHSAHAKTLDTQGLRNEFLVEKVFVADEYTMVYSHIDRIIVGGIMPVTKTVSVGGEVGKQLGVSYFLERRELGVINIGGAGTITVDGQCYEIGHRDALYVGKGAKEVVFASIDTATPAKFYYNCAPAHTTYPTKKVTPDEVSPVTLGDNLTSNRRTINKYFVPDVLETCQLSMGLTELAPGNLWNTMPCHTHERRMEVYFYFNMDDDACVFHMMGQPQETRHIVMHNEQAVISPSWSIHSGVGTKAYTFIWGMVGENQVFDDMDHVAVKDLR.

Residues histidine 196, histidine 198, glutamate 203, and histidine 245 each contribute to the Zn(2+) site.

The protein belongs to the KduI family. Homohexamer. Zn(2+) is required as a cofactor.

It carries out the reaction 5-dehydro-4-deoxy-D-glucuronate = 3-deoxy-D-glycero-2,5-hexodiulosonate. The protein operates within glycan metabolism; pectin degradation; 2-dehydro-3-deoxy-D-gluconate from pectin: step 4/5. Functionally, catalyzes the isomerization of 5-dehydro-4-deoxy-D-glucuronate to 3-deoxy-D-glycero-2,5-hexodiulosonate. This Escherichia coli (strain UTI89 / UPEC) protein is 4-deoxy-L-threo-5-hexosulose-uronate ketol-isomerase.